A 280-amino-acid chain; its full sequence is Hydroxyacylglutathione hydrolase, mitochondrial (280 aa).

Lysine 61 carries the N6-acetyllysine modification. Residues histidine 74, histidine 76, aspartate 78, and histidine 79 each contribute to the Zn(2+) site. The residue at position 88 (lysine 88) is an N6-acetyllysine. 2 residues coordinate Zn(2+): histidine 130 and aspartate 154. Substrate-binding positions include 163-165 (KFY) and 193-195 (HEY). Histidine 193 contacts Zn(2+). Lysine 201 carries the post-translational modification N6-acetyllysine; alternate. The residue at position 201 (lysine 201) is an N6-succinyllysine; alternate. 269–272 (RREK) contributes to the substrate binding site.

Belongs to the metallo-beta-lactamase superfamily. Glyoxalase II family. As to quaternary structure, monomer. It depends on Zn(2+) as a cofactor. As to expression, testis.

The protein localises to the mitochondrion matrix. The protein resides in the cytoplasm. It carries out the reaction an S-(2-hydroxyacyl)glutathione + H2O = a 2-hydroxy carboxylate + glutathione + H(+). The catalysed reaction is (R)-S-lactoylglutathione + H2O = (R)-lactate + glutathione + H(+). It participates in secondary metabolite metabolism; methylglyoxal degradation; (R)-lactate from methylglyoxal: step 2/2. In terms of biological role, thiolesterase that catalyzes the hydrolysis of S-D-lactoyl-glutathione to form glutathione and D-lactic acid. The polypeptide is Hydroxyacylglutathione hydrolase, mitochondrial (HAGH) (Callithrix jacchus (White-tufted-ear marmoset)).